The primary structure comprises 79 residues: ATP synthase subunit 9, mitochondrial (79 aa).

Helical transmembrane passes span 21-41 (SGLIGAGAGVGIVFGCLILAF) and 59-79 (FALTEAIGLLALVMAFLILFI).

It belongs to the ATPase C chain family. F-type ATPases have 2 components, CF(1) - the catalytic core - and CF(0) - the membrane proton channel. CF(1) has five subunits: alpha(3), beta(3), gamma(1), delta(1), epsilon(1). CF(0) has three main subunits: a, b and c.

It is found in the mitochondrion membrane. Its function is as follows. Mitochondrial membrane ATP synthase (F(1)F(0) ATP synthase or Complex V) produces ATP from ADP in the presence of a proton gradient across the membrane which is generated by electron transport complexes of the respiratory chain. F-type ATPases consist of two structural domains, F(1) - containing the extramembraneous catalytic core and F(0) - containing the membrane proton channel, linked together by a central stalk and a peripheral stalk. During catalysis, ATP synthesis in the catalytic domain of F(1) is coupled via a rotary mechanism of the central stalk subunits to proton translocation. Part of the complex F(0) domain. A homomeric c-ring of probably 10 subunits is part of the complex rotary element. The chain is ATP synthase subunit 9, mitochondrial (ATP9) from Acanthamoeba castellanii (Amoeba).